Reading from the N-terminus, the 949-residue chain is ATPase 6, plasma membrane-type (949 aa).

At 1-64 the chain is on the cytoplasmic side; the sequence is MAADISWDEI…EKVENKFLKF (64 aa). A helical transmembrane segment spans residues 65–84; it reads LGFMWNPLSWVMEAAAIMAI. The Extracellular portion of the chain corresponds to 85 to 96; it reads VLANGGGRPPDW. A helical membrane pass occupies residues 97–117; it reads QDFVGITCLLIINSTISFIEE. Over 118-246 the chain is Cytoplasmic; sequence NNAGNAAAAL…GHFQKVLTAI (129 aa). The chain crosses the membrane as a helical span at residues 247 to 267; that stretch reads GNFCICSIGIGMLIEIIIMYP. The Extracellular portion of the chain corresponds to 268–276; that stretch reads IQHRKYRDG. Residues 277 to 294 form a helical membrane-spanning segment; it reads IDNLLVLLIGGIPIAMPT. The Cytoplasmic portion of the chain corresponds to 295–645; the sequence is VLSVTMAIGS…TSRAIFQRMK (351 aa). D332 acts as the 4-aspartylphosphate intermediate in catalysis. Residues D590 and D594 each coordinate Mg(2+). A helical membrane pass occupies residues 646–667; the sequence is NYTIYAVSITIRIVLGFMLVAL. Residues 668–672 lie on the Extracellular side of the membrane; that stretch reads IWEFD. Residues 673-695 form a helical membrane-spanning segment; that stretch reads FSPFMVLIIAILNDGTIMTISKD. Residues 696 to 711 lie on the Cytoplasmic side of the membrane; the sequence is RVKPSPIPDSWKLKEI. The chain crosses the membrane as a helical span at residues 712–732; it reads FATGVVLGTYMALVTVVFFWL. Residues 733–753 are Extracellular-facing; that stretch reads AHDTTFFSDKFGVRSLQGKDE. The chain crosses the membrane as a helical span at residues 754-774; the sequence is ELIAVLYLQVSIISQALIFVT. Residues 775-786 lie on the Cytoplasmic side of the membrane; the sequence is RSRSWSFVERPG. A helical transmembrane segment spans residues 787–807; it reads LLLLIAFFVAQLIATLIATYA. The Extracellular segment spans residues 808 to 815; that stretch reads HWEFARIK. A helical transmembrane segment spans residues 816–836; sequence GCGWGWCGVIWIYSIVTYIPL. The Cytoplasmic segment spans residues 837 to 949; the sequence is DILKFITRYT…IDNLNQHYTV (113 aa). At T883 the chain carries Phosphothreonine. Position 931 is a phosphoserine (S931). The interaction with 14-3-3 proteins stretch occupies residues 947-949; it reads YTV. T948 is subject to Phosphothreonine.

This sequence belongs to the cation transport ATPase (P-type) (TC 3.A.3) family. Type IIIA subfamily. Binds to 14-3-3 proteins. The binding is induced by phosphorylation of Thr-948. Binding to 14-3-3 proteins activates the H(+)-ATPase. Expressed in guard cells.

The protein localises to the membrane. It catalyses the reaction ATP + H2O + H(+)(in) = ADP + phosphate + 2 H(+)(out). Its function is as follows. The plasma membrane H(+) ATPase of plants and fungi generates a proton gradient that drives the active transport of nutrients by H(+)-symport. The resulting external acidification and/or internal alkinization may mediate growth responses. The protein is ATPase 6, plasma membrane-type (AHA6) of Arabidopsis thaliana (Mouse-ear cress).